Here is a 227-residue protein sequence, read N- to C-terminus: Cytidylate kinase (227 aa).

Residue Gly10–Thr18 participates in ATP binding.

Belongs to the cytidylate kinase family. Type 1 subfamily.

It localises to the cytoplasm. The catalysed reaction is CMP + ATP = CDP + ADP. It catalyses the reaction dCMP + ATP = dCDP + ADP. This is Cytidylate kinase from Streptococcus mutans serotype c (strain ATCC 700610 / UA159).